The sequence spans 359 residues: Non-classical arabinogalactan protein 31 (359 aa).

An N-terminal signal peptide occupies residues 1-24 (MGFIGKSVLVSLVALWCFTSSVFT). The tract at residues 31–215 (TQTPSLAPAP…PPVSPPTKPP (185 aa)) is disordered. A compositionally biased stretch (basic residues) spans 44-66 (HHGHHHPHPPHHHHPHPHPHPHP). Residues 67–215 (PAKSPVKPPV…PPVSPPTKPP (149 aa)) show a composition bias toward pro residues. Residues P71, P75, P79, P82, P83, P87, P91, P95, P99, P103, P107, P111, P114, P115, P119, P123, P127, P131, P135, P139, P143, P147, P151, P155, P159, P163, P167, P171, P175, P179, P183, P186, P187, P191, P195, P199, P203, P207, P210, P211, P215, and P219 each carry the 4-hydroxyproline modification. P71, P75, P79, P82, P83, P87, P91, P95, P99, P103, P107, P111, P114, P115, P119, P123, P127, P131, P135, P139, P143, P147, P151, P155, P159, P163, P167, P171, P175, P179, P183, P186, P187, P191, P195, P199, P203, P207, P210, P211, P215, and P219 each carry an O-linked (Ara...) hydroxyproline glycan. Residues 90–109 (PPVYPPTKAPVKPPTKPPVK) form repeat 1. A run of 3 repeats spans residues 122–141 (PPVY…PPVK), 142–161 (PPVY…PPVK), and 162–181 (PPVY…PPVK). N-linked (GlcNAc...) asparagine glycosylation is found at N226 and N269.

The protein belongs to the non-classical AGP family. In terms of processing, hydroxylated on numerous prolines in the proline-rich region. Post-translationally, O-glycosylated on numerous hydroxyprolines in the proline-rich region; noncontiguous hydroxylproline residues are glycosylated with arabinogalactan. Expressed in vascular bundles of roots, leaves, sepals and stamen filaments, and pistils but not stigma.

It localises to the secreted. The protein localises to the cell wall. Functionally, proteoglycan that may contribute to the strengthening of cell walls. The sequence is that of Non-classical arabinogalactan protein 31 from Arabidopsis thaliana (Mouse-ear cress).